A 64-amino-acid chain; its full sequence is Large ribosomal subunit protein uL29 (64 aa).

It belongs to the universal ribosomal protein uL29 family.

This is Large ribosomal subunit protein uL29 from Nitrosomonas europaea (strain ATCC 19718 / CIP 103999 / KCTC 2705 / NBRC 14298).